The sequence spans 1873 residues: Voltage-dependent L-type calcium channel subunit alpha-1S (1873 aa).

The disordered stretch occupies residues 1 to 23 (MEPSSPQDEGLRKKQPKKPVPEI). The Cytoplasmic segment spans residues 1–51 (MEPSSPQDEGLRKKQPKKPVPEILPRPPRALFCLTLENPLRKACISIVEWK). The stretch at 38 to 337 (NPLRKACISI…LVLGVLSGEF (300 aa)) is one I repeat. A helical transmembrane segment spans residues 52–70 (PFETIILLTIFANCVALAV). Over 71-85 (YLPMPEDDNNSLNLG) the chain is Extracellular. A glycan (N-linked (GlcNAc...) asparagine) is linked at N79. A helical membrane pass occupies residues 86–106 (LEKLEYFFLIVFSIEAAMKII). Over 107–115 (AYGFLFHQD) the chain is Cytoplasmic. The helical transmembrane segment at 116–136 (AYLRSGWNVLDFTIVFLGVFT) threads the bilayer. Residues 137–160 (VILEQVNVIQSHTAPMSSKGAGLD) are Extracellular-facing. A helical transmembrane segment spans residues 161–179 (VKALRAFRVLRPLRLVSGV). Over 180–196 (PSLQVVLNSIFKAMLPL) the chain is Cytoplasmic. Residues 197–218 (FHIALLVLFMVIIYAIIGLELF) form a helical membrane-spanning segment. The Extracellular portion of the chain corresponds to 219–279 (KGKMHKTCYF…HGITHFDNFG (61 aa)). 2 disulfides stabilise this stretch: C226/C254 and C245/C261. N257 carries an N-linked (GlcNAc...) asparagine glycan. An intramembrane region (pore-forming) is located at residues 280–301 (FSMLTVYQCITMEGWTDVLYWV). The Selectivity filter of repeat I signature appears at 290-293 (TMEG). E292 is a Ca(2+) binding site. At 302–309 (NDAIGNEW) the chain is on the extracellular side. Residues 310–330 (PWIYFVTLILLGSFFILNLVL) traverse the membrane as a helical segment. Over 331–432 (GVLSGEFTKE…WKCHDIVKSK (102 aa)) the chain is Cytoplasmic. A binding to the beta subunit region spans residues 357 to 374 (QQLDEDLRGYMSWITQGE). 2 positions are modified to phosphoserine: S393 and S397. An II repeat occupies 418 to 664 (NRIFRWKCHD…VFLAIAVDNL (247 aa)). Residues 433 to 451 (VFYWLVILIVALNTLSIAS) traverse the membrane as a helical segment. At 452–462 (EHHNQPLWLTR) the chain is on the extracellular side. Residues 463–483 (LQDIANRVLLSLFTTEMLMKM) form a helical membrane-spanning segment. Topologically, residues 484–494 (YGLGLRQYFMS) are cytoplasmic. Residues 495–514 (IFNRFDCFVVCSGILEILLV) form a helical membrane-spanning segment. Residues 515 to 523 (ESGAMTPLG) are Extracellular-facing. Residues 524–542 (ISVLRCIRLLRIFKITKYW) form a helical membrane-spanning segment. At 543 to 561 (TSLSNLVASLLNSIRSIAS) the chain is on the cytoplasmic side. The chain crosses the membrane as a helical span at residues 562 to 581 (LLLLLFLFIVIFALLGMQLF). Over 582–601 (GGRYDFEDTEVRRSNFDNFP) the chain is Extracellular. The pore-forming intramembrane region spans 602–623 (QALISVFQVLTGEDWTSMMYNG). The short motif at 612–615 (TGED) is the Selectivity filter of repeat II element. Ca(2+) is bound at residue E614. The Extracellular segment spans residues 624–633 (IMAYGGPSYP). Residues 634 to 653 (GMLVCIYFIILFVCGNYILL) traverse the membrane as a helical segment. Residues 654-799 (NVFLAIAVDN…VLCHRIVNAT (146 aa)) are Cytoplasmic-facing. Disordered stretches follow at residues 675 to 717 (KAKA…IPTT) and 731 to 757 (EVKD…LSPR). The residue at position 687 (S687) is a Phosphoserine; by PKA. The span at 690–711 (LPDKSEEEKSTMAKKLEQKPKG) shows a compositional bias: basic and acidic residues. The segment covering 742–751 (PGDDEEDEPE) has biased composition (acidic residues). The segment at 747–760 (EDEPEIPLSPRPRP) is interaction with STAC, STAC2 and STAC3 (via SH3 domains). The stretch at 786–1068 (NKIRVLCHRI…IFVGFVIVTF (283 aa)) is one III repeat. A helical transmembrane segment spans residues 800–818 (WFTNFILLFILLSSAALAA). At 819–830 (EDPIRADSMRNQ) the chain is on the extracellular side. A helical transmembrane segment spans residues 831 to 850 (ILKHFDIGFTSVFTVEIVLK). Residues 851-866 (MTTYGAFLHKGSFCRN) are Cytoplasmic-facing. The chain crosses the membrane as a helical span at residues 867–885 (YFNMLDLLVVAVSLISMGL). The Extracellular portion of the chain corresponds to 886 to 892 (ESSAISV). A helical membrane pass occupies residues 893 to 911 (VKILRVLRVLRPLRAINRA). At 912–930 (KGLKHVVQCMFVAISTIGN) the chain is on the cytoplasmic side. A helical transmembrane segment spans residues 931 to 950 (IVLVTTLLQFMFACIGVQLF). Over 951–1000 (KGKFFRCTDLSKMTEEECRGYYYVYKDGDPMQIELRHREWVHSDFHFDNV) the chain is Extracellular. A disulfide bridge links C957 with C968. The tract at residues 988-1077 (REWVHSDFHF…FQEQGETEYK (90 aa)) is dihydropyridine binding. An intramembrane region (pore-forming) is located at residues 1001 to 1021 (LSAMMSLFTVSTFEGWPQLLY). The Selectivity filter of repeat III signature appears at 1012-1015 (TFEG). E1014 provides a ligand contact to Ca(2+). The Extracellular portion of the chain corresponds to 1022–1038 (KAIDSNAEDVGPIYNNR). Residues 1039-1060 (VEMAIFFIIYIILIAFFMMNIF) traverse the membrane as a helical segment. Topologically, residues 1061–1118 (VGFVIVTFQEQGETEYKNCELDKNQRQCVQYALKARPLRCYIPKNPYQYQVWYIVTSS) are cytoplasmic. Residues 1105-1384 (NPYQYQVWYI…LFVAVIMDNF (280 aa)) form an IV repeat. A helical transmembrane segment spans residues 1119–1140 (YFEYLMFALIMLNTICLGMQHY). N-linked (GlcNAc...) asparagine glycosylation is present at N1141. The Extracellular portion of the chain corresponds to 1141–1148 (NQSEQMNH). A helical transmembrane segment spans residues 1149–1170 (ISDILNVAFTIIFTLEMILKLM). The Cytoplasmic segment spans residues 1171-1180 (AFKARGYFGD). A helical membrane pass occupies residues 1181–1200 (PWNVFDFLIVIGSIIDVILS). Over 1201–1231 (EIDTFLASSGGLYCLGGGCGNVDPDESARIS) the chain is Extracellular. The helical transmembrane segment at 1232-1250 (SAFFRLFRVMRLIKLLSRA) threads the bilayer. Over 1251-1268 (EGVRTLLWTFIKSFQALP) the chain is Cytoplasmic. A helical transmembrane segment spans residues 1269 to 1289 (YVALLIVMLFFIYAVIGMQMF). Residues 1290 to 1311 (GKIALVDGTQINRNNNFQTFPQ) lie on the Extracellular side of the membrane. The segment at residues 1312–1330 (AVLLLFRCATGEAWQEILL) is an intramembrane region (pore-forming). The Selectivity filter of repeat IV signature appears at 1321 to 1324 (TGEA). The Extracellular portion of the chain corresponds to 1331–1356 (ACSYGKLCDPESDYAPGEEYTCGTNF). The tract at residues 1337 to 1403 (LCDPESDYAP…LGPHHLDEFK (67 aa)) is dihydropyridine binding. Cysteines 1338 and 1352 form a disulfide. Residues 1349 to 1391 (EYTCGTNFAYYYFISFYMLCAFLVINLFVAVIMDNFDYLTRDW) form a phenylalkylamine binding region. Residues 1357–1381 (AYYYFISFYMLCAFLVINLFVAVIM) traverse the membrane as a helical segment. Over 1382 to 1873 (DNFDYLTRDW…SQETLIPPRL (492 aa)) the chain is Cytoplasmic. Residues 1522 to 1542 (KFYATFLIQEHFRKFMKRQEE) are interaction with calmodulin. The residue at position 1575 (S1575) is a Phosphoserine; by PKA and CAMK2. S1617 carries the phosphoserine; by PKA modification. A disordered region spans residues 1731 to 1780 (MPRGQAPPAPCQCPRVESSMPEDRKSSTPGSLHEETPHSRSTRENTSRCS). The segment covering 1751-1776 (PEDRKSSTPGSLHEETPHSRSTRENT) has biased composition (basic and acidic residues).

It belongs to the calcium channel alpha-1 subunit (TC 1.A.1.11) family. CACNA1S subfamily. In terms of assembly, component of a calcium channel complex consisting of a pore-forming alpha subunit (CACNA1S) and the ancillary subunits CACNB1 or CACNB2, CACNG1 and CACNA2D1. The channel complex contains alpha, beta, gamma and delta subunits in a 1:1:1:1 ratio, i.e. it contains either CACNB1 or CACNB2. CACNA1S channel activity is modulated by the auxiliary subunits (CACNB1 or CACNB2, CACNG1 and CACNA2D1). Interacts with DYSF and JSRP1. Interacts with RYR1. Interacts with STAC, STAC2 and STAC3 (via their SH3 domains). Interacts with CALM. In terms of processing, the alpha-1S subunit is found in two isoforms in the skeletal muscle: a minor form of 212 kDa containing the complete amino acid sequence, and a major form of 190 kDa derived from the full-length form by post-translational proteolysis close to Phe-1690. Phosphorylated. Phosphorylation by PKA activates the calcium channel. Both the minor and major forms are phosphorylated in vitro by PKA. Phosphorylation at Ser-1575 is involved in beta-adrenergic-mediated regulation of the channel. Skeletal muscle specific.

It localises to the cell membrane. The protein resides in the sarcolemma. Its subcellular location is the T-tubule. The enzyme catalyses Ca(2+)(in) = Ca(2+)(out). Channel activity is blocked by dihydropyridines (DHP), phenylalkylamines, and by benzothiazepines. Its function is as follows. Pore-forming, alpha-1S subunit of the voltage-gated calcium channel that gives rise to L-type calcium currents in skeletal muscle. Calcium channels containing the alpha-1S subunit play an important role in excitation-contraction coupling in skeletal muscle via their interaction with RYR1, which triggers Ca(2+) release from the sarcoplasmic reticulum and ultimately results in muscle contraction. Long-lasting (L-type) calcium channels belong to the 'high-voltage activated' (HVA) group. The polypeptide is Voltage-dependent L-type calcium channel subunit alpha-1S (CACNA1S) (Homo sapiens (Human)).